The following is a 352-amino-acid chain: Histidine biosynthesis bifunctional protein HisB (352 aa).

The tract at residues 1-164 is histidinol-phosphatase; it reads MSQKILFIDR…EIENEILSSF (164 aa). D9 functions as the Nucleophile in the catalytic mechanism. Mg(2+)-binding residues include D9 and D11. The active-site Proton donor is the D11. Zn(2+)-binding residues include C93, H95, C101, and C103. Residue D130 coordinates Mg(2+). The tract at residues 165–352 is imidazoleglycerol-phosphate dehydratase; that stretch reads RSASYQRTTK…ENLASSKGVI (188 aa).

It in the N-terminal section; belongs to the histidinol-phosphatase family. In the C-terminal section; belongs to the imidazoleglycerol-phosphate dehydratase family. It depends on Mg(2+) as a cofactor. Zn(2+) serves as cofactor.

It localises to the cytoplasm. The enzyme catalyses D-erythro-1-(imidazol-4-yl)glycerol 3-phosphate = 3-(imidazol-4-yl)-2-oxopropyl phosphate + H2O. It catalyses the reaction L-histidinol phosphate + H2O = L-histidinol + phosphate. It participates in amino-acid biosynthesis; L-histidine biosynthesis; L-histidine from 5-phospho-alpha-D-ribose 1-diphosphate: step 6/9. It functions in the pathway amino-acid biosynthesis; L-histidine biosynthesis; L-histidine from 5-phospho-alpha-D-ribose 1-diphosphate: step 8/9. The chain is Histidine biosynthesis bifunctional protein HisB from Campylobacter jejuni subsp. jejuni serotype O:6 (strain 81116 / NCTC 11828).